A 386-amino-acid chain; its full sequence is Interleukin-13 receptor subunit alpha-2 (386 aa).

The first 21 residues, 1–21 (MAFIHLDVGFLYTLLVCTAFG), serve as a signal peptide directing secretion. Over 22 to 338 (SMLSNAEIKV…CWKGDIWKET (317 aa)) the chain is Extracellular. Fibronectin type-III domains lie at 33–133 (PPQD…SPQG), 138–234 (KIQD…LQNI), and 239–338 (PPDY…WKET). Residues C64 and C112 are joined by a disulfide bond. N-linked (GlcNAc...) asparagine glycosylation is present at N114. Cystine bridges form between C144-C154 and C183-C196. 2 N-linked (GlcNAc...) asparagine glycosylation sites follow: N214 and N298. Cysteines 268 and 315 form a disulfide. The short motif at 321-325 (WSEWS) is the WSXWS motif element. The helical transmembrane segment at 339-359 (LVFFLIPFAFVSIFVLVITCL) threads the bilayer. Over 360–386 (LLYKQRALLKTIFHTKKEVFSHQDTFC) the chain is Cytoplasmic.

It belongs to the type I cytokine receptor family. Type 5 subfamily. In terms of assembly, interacts with IL4RA. Interacts with high affinity to interleukin-13 (IL13), but not to interleukin-4 (IL4). Cleaved by MMP8 leading to a soluble form that is also able to interact with IL13. Expressed in kidney, placenta, liver, skeletal muscle and thymus. Expression was not seen in whole blood and heart.

It is found in the cell membrane. Cell surface receptor that plays a role in the regulation of IL-13-mediated responses. Functions as a decoy receptor that inhibits IL-13- and IL-4-mediated signal transduction via the JAK-STAT pathway and thereby modulates immune responses and inflammation. Serves as a functional signaling receptor for IL-13 in an alternative pathway involving AP-1 ultimately leading to the production of TGFB1. The protein is Interleukin-13 receptor subunit alpha-2 (IL13RA2) of Canis lupus familiaris (Dog).